The sequence spans 492 residues: Protein KOKOPELLI (492 aa).

Disordered regions lie at residues 218-354 (VTSP…RNVM) and 394-426 (SKFHHKHQEKSKERKRPMSESKGLTTHKQQHQG). Residues 256 to 270 (QETETFDDDSSETEA) show a composition bias toward acidic residues. Residues 287–305 (STSQEYSGETGSSSGSEWE) are compositionally biased toward low complexity. Positions 317–336 (ESSYPPQNDDSVSEVSTSPP) are enriched in polar residues. Basic and acidic residues-rich tracts occupy residues 337-348 (HTDRDTSREPGK) and 403-412 (KSKERKRPMS).

Mostly expressed in pollen and open flowers and, to a lower extent, in closed flowers.

In terms of biological role, positively regulates reproductive function by facilitating male gametophyte formation and double fertilization. The chain is Protein KOKOPELLI from Arabidopsis thaliana (Mouse-ear cress).